A 110-amino-acid chain; its full sequence is Hydrogenase maturation factor HypA (110 aa).

Position 2 (histidine 2) interacts with Ni(2+). Zn(2+) contacts are provided by cysteine 70, cysteine 73, cysteine 86, and cysteine 89.

This sequence belongs to the HypA/HybF family.

Involved in the maturation of [NiFe] hydrogenases. Required for nickel insertion into the metal center of the hydrogenase. The protein is Hydrogenase maturation factor HypA of Geobacter sp. (strain M21).